Consider the following 37-residue polypeptide: Large ribosomal subunit protein bL36 (37 aa).

The protein belongs to the bacterial ribosomal protein bL36 family.

The chain is Large ribosomal subunit protein bL36 from Salinispora arenicola (strain CNS-205).